A 125-amino-acid polypeptide reads, in one-letter code: UPF0231 protein APL_0968 (125 aa).

Belongs to the UPF0231 family.

This chain is UPF0231 protein APL_0968, found in Actinobacillus pleuropneumoniae serotype 5b (strain L20).